The primary structure comprises 158 residues: Transcription elongation factor GreA (158 aa).

Positions 5–75 (EKLPMLAEGY…DLEDRVSRAQ (71 aa)) form a coiled coil.

Belongs to the GreA/GreB family.

In terms of biological role, necessary for efficient RNA polymerase transcription elongation past template-encoded arresting sites. The arresting sites in DNA have the property of trapping a certain fraction of elongating RNA polymerases that pass through, resulting in locked ternary complexes. Cleavage of the nascent transcript by cleavage factors such as GreA or GreB allows the resumption of elongation from the new 3'terminus. GreA releases sequences of 2 to 3 nucleotides. This is Transcription elongation factor GreA from Novosphingobium aromaticivorans (strain ATCC 700278 / DSM 12444 / CCUG 56034 / CIP 105152 / NBRC 16084 / F199).